We begin with the raw amino-acid sequence, 514 residues long: ATP synthase subunit alpha (514 aa).

An ATP-binding site is contributed by 170 to 177 (GDRQIGKT).

This sequence belongs to the ATPase alpha/beta chains family. F-type ATPases have 2 components, CF(1) - the catalytic core - and CF(0) - the membrane proton channel. CF(1) has five subunits: alpha(3), beta(3), gamma(1), delta(1), epsilon(1). CF(0) has three main subunits: a(1), b(2) and c(9-12). The alpha and beta chains form an alternating ring which encloses part of the gamma chain. CF(1) is attached to CF(0) by a central stalk formed by the gamma and epsilon chains, while a peripheral stalk is formed by the delta and b chains.

The protein localises to the cell inner membrane. The enzyme catalyses ATP + H2O + 4 H(+)(in) = ADP + phosphate + 5 H(+)(out). In terms of biological role, produces ATP from ADP in the presence of a proton gradient across the membrane. The alpha chain is a regulatory subunit. In Alcanivorax borkumensis (strain ATCC 700651 / DSM 11573 / NCIMB 13689 / SK2), this protein is ATP synthase subunit alpha.